The chain runs to 180 residues: Mitochondrial membrane protein FMP33 (180 aa).

3 helical membrane-spanning segments follow: residues 34–54 (LYTS…LYLE), 121–141 (FSIV…STLG), and 145–165 (ILYK…YMAL).

It localises to the mitochondrion membrane. The polypeptide is Mitochondrial membrane protein FMP33 (FMP33) (Saccharomyces cerevisiae (strain ATCC 204508 / S288c) (Baker's yeast)).